Reading from the N-terminus, the 555-residue chain is Neutral amino acid transporter B(0) (555 aa).

Met-1 is subject to N-acetylmethionine. The Cytoplasmic portion of the chain corresponds to 1–52 (MAVDPPKADPKGVVAVDPTANCGSGLKSREDQGAKAGGCCSSRDQVCRCLRA). A helical membrane pass occupies residues 53 to 82 (NLLVLLTVAAAVAGVVLGLGVSAAGGAEAL). At 83-95 (GHARFTAFAFPGE) the chain is on the extracellular side. A helical transmembrane segment spans residues 96–117 (LLLRLLEMIILPLVVCSLIGGA). Residues 118–131 (ASLDPSALGRLGAW) lie on the Cytoplasmic side of the membrane. The chain crosses the membrane as a helical span at residues 132 to 154 (ALLFFLVTTLLSSALGVALALAL). The Extracellular segment spans residues 155 to 239 (KPGAAFAAIN…SNATMDQPHC (85 aa)). 2 N-linked (GlcNAc...) asparagine glycosylation sites follow: Asn-164 and Asn-231. The helical transmembrane segment at 240 to 262 (EMKMNILGLVVFAIVFGVALRKL) threads the bilayer. Residues 263 to 271 (GPEGELLIR) are Cytoplasmic-facing. Residues 272 to 299 (FFNSFNDATMVLVSWIMWYAPIGILFLV) traverse the membrane as a helical segment. At 300-320 (AGKIVEMKDIRQLFIGLGKYI) the chain is on the extracellular side. A helical membrane pass occupies residues 321 to 342 (VCCLLGHAIHGLLVLPLIYFLF). At 343 to 347 (TRKNP) the chain is on the cytoplasmic side. An intramembrane region (discontinuously helical) is located at residues 348–378 (YRFLWGIVTPLATAFGTSSSSATLPLMMKCV). Residues 379–387 (EEKNGVAKH) are Cytoplasmic-facing. Residues 388–414 (ISRFILPIGATVNMDGAALFQCVAAVF) form a helical membrane-spanning segment. 3 residues coordinate Na(+): Gly-396, Thr-398, and Asn-400. Residues 415–427 (IAQLNGMSLDFVK) are Extracellular-facing. An intramembrane region (discontinuously helical) is located at residues 428 to 461 (IITILVTATASSVGAAGIPAGGVLTLAIILEAIS). At 462–474 (LPVKDISLILAVD) the chain is on the extracellular side. Residues 475–496 (WLVDRSCTVLNVEGDAFGAGLL) form a helical membrane-spanning segment. The Na(+) site is built by Asn-485 and Asp-489. Over 497-555 (QSYVDRTKMPSSEPELIQVKNDVSLKPLPLATEEGNPLLKQCREPSGDSSATCEKESVM) the chain is Cytoplasmic. A phosphoserine mark is found at Ser-507, Ser-508, Ser-520, Ser-545, and Ser-553. A disordered region spans residues 534–555 (LLKQCREPSGDSSATCEKESVM).

It belongs to the dicarboxylate/amino acid:cation symporter (DAACS) (TC 2.A.23) family. As to quaternary structure, homotrimer.

Its subcellular location is the cell membrane. It is found in the melanosome. It carries out the reaction L-glutamine(out) + L-serine(in) + Na(+)(out) = L-glutamine(in) + L-serine(out) + Na(+)(in). The enzyme catalyses L-glutamine(in) + L-serine(out) + Na(+)(out) = L-glutamine(out) + L-serine(in) + Na(+)(in). It catalyses the reaction L-threonine(in) + L-glutamine(out) + Na(+)(out) = L-threonine(out) + L-glutamine(in) + Na(+)(in). The catalysed reaction is L-threonine(out) + L-glutamine(in) + Na(+)(out) = L-threonine(in) + L-glutamine(out) + Na(+)(in). It carries out the reaction L-asparagine(in) + L-glutamine(out) + Na(+)(out) = L-asparagine(out) + L-glutamine(in) + Na(+)(in). The enzyme catalyses L-asparagine(out) + L-glutamine(in) + Na(+)(out) = L-asparagine(in) + L-glutamine(out) + Na(+)(in). It catalyses the reaction L-glutamine(in) + L-alanine(out) + Na(+)(out) = L-glutamine(out) + L-alanine(in) + Na(+)(in). The catalysed reaction is L-valine(out) + L-glutamine(in) + Na(+)(out) = L-valine(in) + L-glutamine(out) + Na(+)(in). It carries out the reaction L-glutamine(in) + L-methionine(out) + Na(+)(out) = L-glutamine(out) + L-methionine(in) + Na(+)(in). The enzyme catalyses L-glutamine(in) + L-glutamate(out) + Na(+)(out) + H(+)(out) = L-glutamine(out) + L-glutamate(in) + Na(+)(in) + H(+)(in). It catalyses the reaction D-serine(in) + L-glutamine(out) + Na(+)(out) = D-serine(out) + L-glutamine(in) + Na(+)(in). The catalysed reaction is D-serine(in) + L-alanine(out) + Na(+)(out) = D-serine(out) + L-alanine(in) + Na(+)(in). It carries out the reaction nitrate(in) = nitrate(out). The enzyme catalyses iodide(out) = iodide(in). It catalyses the reaction thiocyanate(in) = thiocyanate(out). Down-regulated at acidic pH. Its function is as follows. Sodium-coupled antiporter of neutral amino acids. In a tri-substrate transport cycle, exchanges neutral amino acids between the extracellular and intracellular compartments, coupled to the inward cotransport of at least one sodium ion. The preferred substrate is the essential amino acid L-glutamine, a precursor for biosynthesis of proteins, nucleotides and amine sugars as well as an alternative fuel for mitochondrial oxidative phosphorylation. Exchanges L-glutamine with other neutral amino acids such as L-serine, L-threonine and L-asparagine in a bidirectional way. Provides L-glutamine to proliferating stem and activated cells driving the metabolic switch toward cell differentiation. The transport cycle is usually pH-independent, with the exception of L-glutamate. Transports extracellular L-glutamate coupled to the cotransport of one proton and one sodium ion in exchange for intracellular L-glutamine counter-ion. May provide for L-glutamate uptake in glial cells regulating glutamine/glutamate cycle in the nervous system. Can transport D-amino acids. Mediates D-serine release from the retinal glia potentially affecting NMDA receptor function in retinal neurons. Displays sodium- and amino acid-dependent but uncoupled channel-like anion conductance with a preference SCN(-) &gt;&gt; NO3(-) &gt; I(-) &gt; Cl(-). Through binding of the fusogenic protein syncytin-1/ERVW-1 may mediate trophoblasts syncytialization, the spontaneous fusion of their plasma membranes, an essential process in placental development. The chain is Neutral amino acid transporter B(0) (Slc1a5) from Rattus norvegicus (Rat).